A 31-amino-acid chain; its full sequence is Bacteriocin lactocin-705 (31 aa).

Its function is as follows. Antibacterial activity against several lactic acid bacteria, Listeria, Streptococci, etc. The polypeptide is Bacteriocin lactocin-705 (Lacticaseibacillus paracasei (Lactobacillus paracasei)).